The following is an 847-amino-acid chain: Matrin-3 (847 aa).

The residue at position 2 (S2) is an N-acetylserine. K3 is modified (N6-acetyllysine; alternate). A Glycyl lysine isopeptide (Lys-Gly) (interchain with G-Cter in SUMO2); alternate cross-link involves residue K3. 8 positions are modified to phosphoserine: S4, S9, S11, S14, S22, S41, S118, and S126. Residues K132 and K146 each participate in a glycyl lysine isopeptide (Lys-Gly) (interchain with G-Cter in SUMO2) cross-link. 2 disordered regions span residues 146 to 174 and 187 to 214; these read KRRR…YRVP and DSFD…SGYY. T150 bears the Phosphothreonine mark. At S157 the chain carries Phosphoserine. A Phosphotyrosine modification is found at Y158. The span at 160–174 shows a compositional bias: basic and acidic residues; that stretch reads RDGRSATREPPYRVP. Phosphoserine is present on residues S164, S188, and S195. Basic and acidic residues predominate over residues 201-214; sequence DYDHGSRSQESGYY. Y202 carries the phosphotyrosine modification. S206, S208, and S211 each carry phosphoserine. Phosphotyrosine is present on Y219. Phosphoserine is present on S234. K245 participates in a covalent cross-link: Glycyl lysine isopeptide (Lys-Gly) (interchain with G-Cter in SUMO2). S264 is subject to Phosphoserine. Residue K269 forms a Glycyl lysine isopeptide (Lys-Gly) (interchain with G-Cter in SUMO2) linkage. S275 carries the phosphoserine modification. The tract at residues 342–394 is disordered; the sequence is PFMLQQSTNPAPGILGPPPPSFHLGGPAVGPRGNLGAGNGNLQGPRHMQKGRV. The 76-residue stretch at 398–473 folds into the RRM 1 domain; the sequence is RVVHIMDFQR…KPVRVHLSQK (76 aa). Glycyl lysine isopeptide (Lys-Gly) (interchain with G-Cter in SUMO2) cross-links involve residues K478, K487, and K491. The 76-residue stretch at 496-571 folds into the RRM 2 domain; the sequence is RVIHLSNLPH…RCVKVDLSEK (76 aa). A phosphoserine mark is found at S509 and S511. Residue K515 forms a Glycyl lysine isopeptide (Lys-Gly) (interchain with G-Cter in SUMO2) linkage. K522 is modified (N6-acetyllysine; alternate). K522 participates in a covalent cross-link: Glycyl lysine isopeptide (Lys-Gly) (interchain with G-Cter in SUMO2); alternate. S533 is modified (phosphoserine). Residues K554 and K555 each participate in a glycyl lysine isopeptide (Lys-Gly) (interchain with G-Cter in SUMO2) cross-link. K571 bears the N6-acetyllysine mark. The disordered stretch occupies residues 588 to 786; that stretch reads KKDKSRKRSY…DEYRIGPYQP (199 aa). S596, S598, S604, and S606 each carry phosphoserine. The span at 600 to 643 shows a compositional bias: basic and acidic residues; it reads DGKESPSDKKSKTDGSQKTESSTEGKEQEEKSGEDGEKDTKDDQ. Residues K617 and K630 each participate in a glycyl lysine isopeptide (Lys-Gly) (interchain with G-Cter in SUMO2) cross-link. Residues 653–665 are compositionally biased toward acidic residues; that stretch reads ESEDELLVDEEEA. 4 positions are modified to phosphoserine: S654, S671, S673, and S674. Residues 666 to 676 are compositionally biased toward low complexity; the sequence is AALLESGSSVG. At T679 the chain carries Phosphothreonine. The residue at position 689 (S689) is a Phosphoserine. The span at 689–704 shows a compositional bias: basic and acidic residues; it reads SDGKKEPSDKAVKKDG. The short motif at 710–718 is the Nuclear localization signal element; sequence AKKKLKKVD. Residues K719 and K736 each participate in a glycyl lysine isopeptide (Lys-Gly) (interchain with G-Cter in SUMO2) cross-link. The residue at position 741 (T741) is a Phosphothreonine. A phosphoserine mark is found at S747, S759, and S766. Residues 767–780 are compositionally biased toward basic and acidic residues; it reads DENKDDYTIPDEYR. K770 participates in a covalent cross-link: Glycyl lysine isopeptide (Lys-Gly) (interchain with G-Cter in SUMO2). The Matrin-type zinc finger occupies 801–832; sequence FYCKLCSLFYTNEEVAKNTHCSSLPHYQKLKK. An N6-acetyllysine; alternate modification is found at K836. Residue K836 forms a Glycyl lysine isopeptide (Lys-Gly) (interchain with G-Cter in SUMO2); alternate linkage.

Part of a complex consisting of SFPQ, NONO and MATR3. Interacts with AGO1 and AGO2. Part of a complex composed at least of ASH2L, EMSY, HCFC1, HSPA8, CCAR2, MATR3, MKI67, RBBP5, TUBB2A, WDR5 and ZNF335; this complex may have a histone H3-specific methyltransferase activity. Interacts with TARDBP. Part of the HDP-RNP complex composed of at least HEXIM1, PRKDC, XRCC5, XRCC6, paraspeckle proteins (SFPQ, NONO, PSPC1, RBM14, and MATR3) and NEAT1 RNA. Interacts with FUS. Interacts with IGF2BP1; the interaction is enhanced by SEPIN14P20 peptide RBPR. Interacts with IGF2BP2 and IGF2BP3. Interacts with RBPMS.

It is found in the nucleus matrix. Functionally, may play a role in transcription or may interact with other nuclear matrix proteins to form the internal fibrogranular network. In association with the SFPQ-NONO heteromer may play a role in nuclear retention of defective RNAs. Plays a role in the regulation of DNA virus-mediated innate immune response by assembling into the HDP-RNP complex, a complex that serves as a platform for IRF3 phosphorylation and subsequent innate immune response activation through the cGAS-STING pathway. Binds to N6-methyladenosine (m6A)-containing mRNAs and contributes to MYC stability by binding to m6A-containing MYC mRNAs. May bind to specific miRNA hairpins. This is Matrin-3 (MATR3) from Homo sapiens (Human).